A 266-amino-acid chain; its full sequence is MPRRAFRVAYDGRPYHGFQRQPDVSTVAGELFGALRRLDVFDGAKPPGYAAAGRTDAGVSARAQTVAFDAPAWLTPDAFTGALPDPIQVWAHADAPPEFHATHDAVARTYVYYWYAPDSRATDDRAAGALDRLTGTHDFHNLTPNTTNTVRELDATLDRDGAFRVITVRAGGFCRELVRRVVSLVQLVTETGDTDRIDTVLGDEPVAGPDGVPPADPHPLVLHAVAYDGLSFTVDEDAAERARTTFRAARADHHERARVAGHLASI.

Aspartate 56 serves as the catalytic Nucleophile. Tyrosine 110 contacts substrate.

The protein belongs to the tRNA pseudouridine synthase TruA family.

It carries out the reaction uridine(38/39/40) in tRNA = pseudouridine(38/39/40) in tRNA. In terms of biological role, formation of pseudouridine at positions 38, 39 and 40 in the anticodon stem and loop of transfer RNAs. The chain is tRNA pseudouridine synthase A from Halobacterium salinarum (strain ATCC 29341 / DSM 671 / R1).